The chain runs to 407 residues: Digeranylgeranylglycerophospholipid reductase (407 aa).

Positions 15, 34, 45, 46, 48, 99, 123, 281, 293, and 294 each coordinate FAD.

It belongs to the geranylgeranyl reductase family. DGGGPL reductase subfamily. Requires FAD as cofactor.

It catalyses the reaction a 2,3-bis-O-phytanyl-sn-glycerol 1-phospholipid + 8 oxidized 2[4Fe-4S]-[ferredoxin] = a 2,3-bis-O-(geranylgeranyl)-sn-glycerol 1-phospholipid + 8 reduced 2[4Fe-4S]-[ferredoxin] + 16 H(+). It carries out the reaction 2,3-bis-O-(phytanyl)-sn-glycerol 1-phosphate + 8 oxidized 2[4Fe-4S]-[ferredoxin] = 2,3-bis-O-(geranylgeranyl)-sn-glycerol 1-phosphate + 8 reduced 2[4Fe-4S]-[ferredoxin] + 16 H(+). The catalysed reaction is a 2,3-bis-O-phytanyl-sn-glycerol 1-phospholipid + 8 A = a 2,3-bis-O-(geranylgeranyl)-sn-glycerol 1-phospholipid + 8 AH2. The enzyme catalyses CDP-2,3-bis-O-(geranylgeranyl)-sn-glycerol + 8 AH2 = CDP-2,3-bis-O-(phytanyl)-sn-glycerol + 8 A. It catalyses the reaction archaetidylserine + 8 AH2 = 2,3-bis-O-phytanyl-sn-glycero-3-phospho-L-serine + 8 A. The protein operates within membrane lipid metabolism; glycerophospholipid metabolism. Is involved in the reduction of 2,3-digeranylgeranylglycerophospholipids (unsaturated archaeols) into 2,3-diphytanylglycerophospholipids (saturated archaeols) in the biosynthesis of archaeal membrane lipids. Catalyzes the formation of archaetidic acid (2,3-di-O-phytanyl-sn-glyceryl phosphate) from 2,3-di-O-geranylgeranylglyceryl phosphate (DGGGP) via the hydrogenation of each double bond of the isoprenoid chains. Is also probably able to reduce double bonds of geranyl groups in CDP-2,3-bis-O-(geranylgeranyl)-sn-glycerol and archaetidylserine, thus acting at various stages in the biosynthesis of archaeal membrane lipids. The sequence is that of Digeranylgeranylglycerophospholipid reductase from Methanosarcina mazei (strain ATCC BAA-159 / DSM 3647 / Goe1 / Go1 / JCM 11833 / OCM 88) (Methanosarcina frisia).